Reading from the N-terminus, the 232-residue chain is Ribonuclease 3 (232 aa).

An RNase III domain is found at 5-134; it reads ENLLFDRFGL…FLGALLLDKG (130 aa). Glu-47 serves as a coordination point for Mg(2+). Asp-51 is an active-site residue. Asp-120 and Glu-123 together coordinate Mg(2+). Residue Glu-123 is part of the active site. One can recognise a DRBM domain in the interval 160–229; it reads DYKTKLQELL…AKNAFEKENH (70 aa).

Belongs to the ribonuclease III family. In terms of assembly, homodimer. Mg(2+) is required as a cofactor.

Its subcellular location is the cytoplasm. The enzyme catalyses Endonucleolytic cleavage to 5'-phosphomonoester.. Digests double-stranded RNA. Involved in the processing of primary rRNA transcript to yield the immediate precursors to the large and small rRNAs (23S and 16S). Processes some mRNAs, and tRNAs when they are encoded in the rRNA operon. Processes pre-crRNA and tracrRNA of type II CRISPR loci if present in the organism. This chain is Ribonuclease 3, found in Streptococcus gordonii (strain Challis / ATCC 35105 / BCRC 15272 / CH1 / DL1 / V288).